An 88-amino-acid polypeptide reads, in one-letter code: Small ribosomal subunit protein uS17 (88 aa).

This sequence belongs to the universal ribosomal protein uS17 family. As to quaternary structure, part of the 30S ribosomal subunit.

One of the primary rRNA binding proteins, it binds specifically to the 5'-end of 16S ribosomal RNA. The protein is Small ribosomal subunit protein uS17 of Dechloromonas aromatica (strain RCB).